The following is a 306-amino-acid chain: Homoserine O-acetyltransferase (306 aa).

The active-site Acyl-thioester intermediate is the Cys142. Substrate-binding residues include Lys163 and Ser192. His235 functions as the Proton acceptor in the catalytic mechanism. The active site involves Glu237. Substrate is bound at residue Arg249.

Belongs to the MetA family.

The protein localises to the cytoplasm. It carries out the reaction L-homoserine + acetyl-CoA = O-acetyl-L-homoserine + CoA. Its pathway is amino-acid biosynthesis; L-methionine biosynthesis via de novo pathway; O-acetyl-L-homoserine from L-homoserine: step 1/1. Its function is as follows. Transfers an acetyl group from acetyl-CoA to L-homoserine, forming acetyl-L-homoserine. The sequence is that of Homoserine O-acetyltransferase from Clostridium botulinum (strain Alaska E43 / Type E3).